The primary structure comprises 32 residues: ATP synthase 28 kDa subunit, mitochondrial (32 aa).

The protein resides in the mitochondrion. Its subcellular location is the mitochondrion inner membrane. In terms of biological role, mitochondrial membrane ATP synthase (F(1)F(0) ATP synthase or Complex V) produces ATP from ADP in the presence of a proton gradient across the membrane which is generated by electron transport complexes of the respiratory chain. F-type ATPases consist of two structural domains, F(1) - containing the extramembraneous catalytic core and F(0) - containing the membrane proton channel, linked together by a central stalk and a peripheral stalk. During catalysis, ATP synthesis in the catalytic domain of F(1) is coupled via a rotary mechanism of the central stalk subunits to proton translocation. Part of the complex F(0) domain. The sequence is that of ATP synthase 28 kDa subunit, mitochondrial from Spinacia oleracea (Spinach).